Reading from the N-terminus, the 683-residue chain is Phenoloxidase 3 (683 aa).

Positions 1–48 are excised as a propeptide; that stretch reads MADKKNLLLLFDHPTEPVFMDKGGNGTVFDVPASYVTDRYNKMCKKVQ. A glycan (N-linked (GlcNAc...) asparagine) is linked at asparagine 25. Cu cation-binding residues include histidine 209, histidine 213, and histidine 239. Residue glutamate 351 is the Proton acceptor of the active site. Residue asparagine 358 is glycosylated (N-linked (GlcNAc...) asparagine). 3 residues coordinate Cu cation: histidine 366, histidine 370, and histidine 406. Residues asparagine 492 and asparagine 514 are each glycosylated (N-linked (GlcNAc...) asparagine). 2 cysteine pairs are disulfide-bonded: cysteine 574-cysteine 617 and cysteine 576-cysteine 624.

Belongs to the tyrosinase family. Requires Cu(2+) as cofactor. Upon activation, a trypsin type protease cleaves prophenol oxidase to yield the active enzyme.

It localises to the secreted. It catalyses the reaction 2 L-dopa + O2 = 2 L-dopaquinone + 2 H2O. The catalysed reaction is L-tyrosine + O2 = L-dopaquinone + H2O. Functionally, this is a copper-containing oxidase that functions in the formation of pigments such as melanins and other polyphenolic compounds. Catalyzes the rate-limiting conversions of tyrosine to DOPA, DOPA to DOPA-quinone and possibly 5,6 dihydroxyindole to indole-5'6 quinone. This Drosophila erecta (Fruit fly) protein is Phenoloxidase 3 (PPO3).